The chain runs to 435 residues: Gamma-glutamyl phosphate reductase (435 aa).

The protein belongs to the gamma-glutamyl phosphate reductase family.

Its subcellular location is the cytoplasm. It catalyses the reaction L-glutamate 5-semialdehyde + phosphate + NADP(+) = L-glutamyl 5-phosphate + NADPH + H(+). The protein operates within amino-acid biosynthesis; L-proline biosynthesis; L-glutamate 5-semialdehyde from L-glutamate: step 2/2. Its function is as follows. Catalyzes the NADPH-dependent reduction of L-glutamate 5-phosphate into L-glutamate 5-semialdehyde and phosphate. The product spontaneously undergoes cyclization to form 1-pyrroline-5-carboxylate. This is Gamma-glutamyl phosphate reductase from Synechococcus sp. (strain CC9605).